The sequence spans 310 residues: Putative HTH-type transcriptional regulatory protein LS215_1371 (310 aa).

An HTH cro/C1-type domain is found at 125-180 (LKHKREEMGYSIGDVAKFLGVSRKAIYDYEKGDSDVSLEVAEKLIDLFGDDIIGDV). The H-T-H motif DNA-binding region spans 136–155 (IGDVAKFLGVSRKAIYDYEK).

The polypeptide is Putative HTH-type transcriptional regulatory protein LS215_1371 (Saccharolobus islandicus (strain L.S.2.15 / Lassen #1) (Sulfolobus islandicus)).